A 170-amino-acid polypeptide reads, in one-letter code: ATP synthase subunit b (170 aa).

Residues 30–50 (FFFVLAIFLVVLAVIGTFVVP) traverse the membrane as a helical segment.

It belongs to the ATPase B chain family. As to quaternary structure, F-type ATPases have 2 components, F(1) - the catalytic core - and F(0) - the membrane proton channel. F(1) has five subunits: alpha(3), beta(3), gamma(1), delta(1), epsilon(1). F(0) has three main subunits: a(1), b(2) and c(10-14). The alpha and beta chains form an alternating ring which encloses part of the gamma chain. F(1) is attached to F(0) by a central stalk formed by the gamma and epsilon chains, while a peripheral stalk is formed by the delta and b chains.

It is found in the cell membrane. In terms of biological role, f(1)F(0) ATP synthase produces ATP from ADP in the presence of a proton or sodium gradient. F-type ATPases consist of two structural domains, F(1) containing the extramembraneous catalytic core and F(0) containing the membrane proton channel, linked together by a central stalk and a peripheral stalk. During catalysis, ATP synthesis in the catalytic domain of F(1) is coupled via a rotary mechanism of the central stalk subunits to proton translocation. Its function is as follows. Component of the F(0) channel, it forms part of the peripheral stalk, linking F(1) to F(0). The protein is ATP synthase subunit b of Mycobacterium ulcerans (strain Agy99).